The sequence spans 389 residues: Alanine racemase (389 aa).

Lys-46 functions as the Proton acceptor; specific for D-alanine in the catalytic mechanism. Lys-46 carries the post-translational modification N6-(pyridoxal phosphate)lysine. Arg-144 serves as a coordination point for substrate. Tyr-275 (proton acceptor; specific for L-alanine) is an active-site residue. Residue Met-323 participates in substrate binding.

The protein belongs to the alanine racemase family. It depends on pyridoxal 5'-phosphate as a cofactor.

It catalyses the reaction L-alanine = D-alanine. It functions in the pathway amino-acid biosynthesis; D-alanine biosynthesis; D-alanine from L-alanine: step 1/1. Its function is as follows. Catalyzes the interconversion of L-alanine and D-alanine. May also act on other amino acids. The sequence is that of Alanine racemase (alr) from Mycolicibacterium smegmatis (strain ATCC 700084 / mc(2)155) (Mycobacterium smegmatis).